The primary structure comprises 2103 residues: Zinc finger SWIM domain-containing protein 8 homolog (2103 aa).

An SWIM-type zinc finger spans residues 191–227 (FNVAVTFDRRRISSCNCTCTSSAYWCSHVVAVCLHRI). Disordered stretches follow at residues 684-860 (DGNR…GSTA), 1237-1262 (SSNP…GGSG), 1310-1399 (SSGS…IPNQ), 1735-1772 (MQMF…QVVQ), 1786-1864 (QQVQ…GVGV), and 1888-1916 (PFMQ…RQPH). Polar residues predominate over residues 724 to 740 (SALTESDSQSSFDAVSH). Composition is skewed to low complexity over residues 754–789 (AVGV…STSS) and 835–857 (GRVA…VGSG). The span at 1237 to 1249 (SSNPPVRTRSNQP) shows a compositional bias: polar residues. The segment covering 1320-1351 (GMVPTTNAAGTTGTPSSSSTTVSGSQNPNGNP) has biased composition (low complexity). Residues 1352-1377 (SGSGGGGNGGGGNGGGGGGGGGGGGS) show a composition bias toward gly residues. A compositionally biased stretch (pro residues) spans 1755–1764 (QPPPQQPPNP). Low complexity-rich tracts occupy residues 1786–1813 (QQVQ…SGFQ) and 1820–1835 (AFQA…MQAG). 2 stretches are compositionally biased toward pro residues: residues 1836 to 1859 (PPGP…PNGP) and 1894 to 1908 (PPQP…PSQP).

This sequence belongs to the ZSWIM8 family. In terms of assembly, component of the SCF-like E3 ubiquitin-protein ligase complex.

It functions in the pathway protein modification; protein ubiquitination. Its function is as follows. Substrate recognition component of a SCF-like E3 ubiquitin-protein ligase complex that promotes target-directed microRNA degradation (TDMD), a process that mediates degradation of microRNAs (miRNAs). The SCF-like E3 ubiquitin-protein ligase complex acts by catalyzing ubiquitination and subsequent degradation of AGO1, thereby exposing miRNAs for degradation. The sequence is that of Zinc finger SWIM domain-containing protein 8 homolog from Drosophila melanogaster (Fruit fly).